The primary structure comprises 614 residues: Zinc metalloproteinase-disintegrin-like protein F1 (614 aa).

The signal sequence occupies residues 1 to 20 (MLQVLLVTICLAVFPYQGSS). Residues 21 to 192 (IILESGNVND…IKASQFILTP (172 aa)) constitute a propeptide that is removed on maturation. Positions 167–173 (PKKCGVT) match the Cys-switch; controls maturation motif. Glu-193 carries the pyrrolidone carboxylic acid (Glu) modification. Positions 202–398 (KYIKLAIVVD…HTPRCILNEP (197 aa)) constitute a Peptidase M12B domain. N-linked (GlcNAc...) asparagine glycosylation is present at Asn-221. 3 disulfide bridges follow: Cys-313–Cys-393, Cys-353–Cys-377, and Cys-355–Cys-360. Position 338 (His-338) interacts with Zn(2+). The short motif at 338 to 349 (HELGHNLGINHD) is the Metal-binding element. Glu-339 acts as the Proton acceptor in catalysis. His-342 and His-348 together coordinate Zn(2+). The Disintegrin domain maps to 406–492 (PAVCGNYVVE…ECPMDHIQKN (87 aa)). Ca(2+) is bound by residues Val-408, Asn-411, Glu-415, Glu-418, and Asp-421. Disulfide bonds link Cys-409-Cys-438, Cys-420-Cys-433, Cys-422-Cys-428, Cys-432-Cys-455, Cys-446-Cys-452, Cys-451-Cys-477, Cys-464-Cys-484, Cys-471-Cys-503, Cys-496-Cys-508, Cys-515-Cys-565, Cys-530-Cys-575, Cys-543-Cys-553, Cys-560-Cys-601, and Cys-595-Cys-607. The short motif at 470–472 (ECD) is the D/ECD-tripeptide element. Asp-472, Glu-475, and Asp-487 together coordinate Ca(2+). Asn-534 is a glycosylation site (N-linked (GlcNAc...) asparagine).

The protein belongs to the venom metalloproteinase (M12B) family. P-III subfamily. P-IIIa sub-subfamily. As to quaternary structure, monomer. It depends on Zn(2+) as a cofactor. Post-translationally, N-glycosylated. The N-terminus is blocked. As to expression, expressed by the venom gland (at protein level). Expressed by the venom gland.

It is found in the secreted. Its activity is regulated as follows. The alpha-fibrinogenase activity is inhibited by EDTA, but not by pefabloc. Zinc metalloprotease that has fibrinogenolytic activity. Does not have hemorrhagic activity in rats. Cleaves insulin B chain at '38-Ala-|-Leu-39' and '40-Tyr-|-Leu-41' bonds. Hydrolyzes only partially and weakly isolated extracellular matrix (ECM) bovine fibronectin and basal membrane (BM) protein human collagen IV in vitro. Murine laminin is not hydrolyzed, neither isolated nor in a solubilized BM preparation. Nidogen is hydrolyzed at '350-Ser-|-Phe-351' bond in a solubilized BM preparation. Hydrolyzes plasma proteins involved in blood coagulation in vitro. Has alpha-fibrinogenase activity cleaving human fibrinogen alpha chain at '432-Lys-|-Leu-433' bond, but does not cleave beta or gamma chains. Does not cleave fibrin. Hydrolyzes only partially bovine prothrombin at '200-Ser-|-Gly-201' bond, factor X (FX) heavy chain, and very slowly, FX light chain and plasminogen in vitro, without activating any of them. Has no effect in plasma thrombin generation. Does not inhibit platelet aggregation induced by collagen in vitro. May have a delayed pathological action as an anticoagulant in envenomed patients after they received serotherapy as it is not recognized by the venom antiserum. The chain is Zinc metalloproteinase-disintegrin-like protein F1 from Vipera ammodytes ammodytes (Western sand viper).